Here is a 344-residue protein sequence, read N- to C-terminus: L-rhamnose-proton symporter (344 aa).

10 helical membrane-spanning segments follow: residues 4 to 24 (AITM…CFYA), 38 to 58 (WSVG…ALLL), 68 to 88 (FSLS…IGNI), 101 to 121 (MGIG…TPII), 137 to 157 (TLLG…AGQL), 175 to 195 (LVLA…MNAA), 214 to 234 (LPSY…FCFI), 259 to 279 (VLLS…YAWG), 290 to 310 (ISWM…GLVL), and 323 to 343 (VLSL…IGMA).

It belongs to the L-rhamnose transporter (TC 2.A.7.6) family.

It localises to the cell inner membrane. The enzyme catalyses L-rhamnopyranose(in) + H(+)(in) = L-rhamnopyranose(out) + H(+)(out). Uptake of L-rhamnose across the cytoplasmic membrane with the concomitant transport of protons into the cell (symport system). The chain is L-rhamnose-proton symporter from Shigella boydii serotype 18 (strain CDC 3083-94 / BS512).